Reading from the N-terminus, the 93-residue chain is Small ribosomal subunit protein uS19 (93 aa).

It belongs to the universal ribosomal protein uS19 family.

In terms of biological role, protein S19 forms a complex with S13 that binds strongly to the 16S ribosomal RNA. The sequence is that of Small ribosomal subunit protein uS19 from Microcystis aeruginosa (strain NIES-843 / IAM M-2473).